The chain runs to 438 residues: Aspartate--tRNA(Asp/Asn) ligase (438 aa).

Glutamate 176 contacts L-aspartate. Residues 198-201 (QLYK) are aspartate. Residue arginine 220 coordinates L-aspartate. ATP contacts are provided by residues 220 to 222 (RAE), 228 to 230 (RHL), and glutamate 361. Positions 361 and 364 each coordinate Mg(2+). The L-aspartate site is built by serine 364 and arginine 368. An ATP-binding site is contributed by 409 to 412 (GADR).

The protein belongs to the class-II aminoacyl-tRNA synthetase family. Type 2 subfamily. In terms of assembly, homodimer. Mg(2+) is required as a cofactor.

It is found in the cytoplasm. The catalysed reaction is tRNA(Asx) + L-aspartate + ATP = L-aspartyl-tRNA(Asx) + AMP + diphosphate. Aspartyl-tRNA synthetase with relaxed tRNA specificity since it is able to aspartylate not only its cognate tRNA(Asp) but also tRNA(Asn). Reaction proceeds in two steps: L-aspartate is first activated by ATP to form Asp-AMP and then transferred to the acceptor end of tRNA(Asp/Asn). This chain is Aspartate--tRNA(Asp/Asn) ligase, found in Methanococcus maripaludis (strain C7 / ATCC BAA-1331).